The primary structure comprises 120 residues: Putative monooxygenase GME11364 (120 aa).

The ABM domain maps to 9–99 (VSVHIRLTVD…ILLKPHEVEL (91 aa)).

It belongs to the LsrG family.

It participates in secondary metabolite biosynthesis. Functionally, putative monooxygenase; part of the gene cluster that mediates the biosynthesis of dibenzodioxocinones such as pestalotiollide B, a novel class of inhibitors against cholesterol ester transfer protein (CEPT). The biosynthesis initiates from condensation of acetate and malonate units catalyzed by the non-reducing PKS pks8/GME11356. Pks8/GME11356 lacks a thioesterase (TE) domain, which is important to the cyclizing of the third ring of atrochrysone carboxylic acid, and the esterase GME11355 might play the role of TE and catalyzes the cyclization reaction of the C ring. The lactamase-like protein GME11357 (or other beta-lactamases in Pestalotiopsis microspora) probably hydrolyzes the thioester bond between the ACP of pks8/GME11356 and the intermediate to release atrochrysone carboxylic acid, which is spontaneously dehydrates to form endocrocin anthrone. Endocrocin anthrone is further converted to emodin via the endocrocin intermediate. Emodin is then oxidized by several enzymes such as the Baeyer-Villiger oxidase GME11358, the oxidoreductase GME11367, the short chain dehydrogenase/reductase GME11373, as well as by other oxidoreductases from the cluster, to modify the A and C rings and open the B ring, and finally yield monodictyphenone. The prenyltransferase GME11375 may catalyze the addition reaction between the C5 side chains and the carbon bone of dibenzodioxocinones. The remaining biochemical reactions to the final product dibenzodioxocinones should be methylation catalyzed by methyltransferase GME11366 and reduction and lactonization reaction catalyzed by a series of oxidordeuctases. The protein is Putative monooxygenase GME11364 of Pestalotiopsis microspora.